Consider the following 2279-residue polypeptide: Zinc finger protein 318 (2279 aa).

2 stretches are compositionally biased toward low complexity: residues 1 to 12 (MYRSSARSSVSS) and 25 to 39 (SGRS…ARRS). Disordered stretches follow at residues 1 to 140 (MYRS…PGLC) and 164 to 189 (RRRL…LTDD). Residues 1-1092 (MYRSSARSSV…THMHNKKHTQ (1092 aa)) form an interaction with AR region. Phosphoserine is present on serine 40. A compositionally biased stretch (basic residues) spans 53-67 (PARRPRSPSGHRGRR). Serine 79 and serine 81 each carry phosphoserine. A compositionally biased stretch (basic and acidic residues) spans 110–132 (SRGESRADYARDGRGDHPGDSGS). Serine 136 and serine 173 each carry phosphoserine. Residues 177 to 188 (NLEDMDRDDLTD) are compositionally biased toward acidic residues. Tyrosine 205 carries the phosphotyrosine modification. Phosphoserine is present on residues serine 207 and serine 214. 2 disordered regions span residues 279–346 (TVKI…DGGG) and 397–416 (LESF…YSGH). The span at 311–333 (LDPEFRELDLARRKREEEEERSR) shows a compositional bias: basic and acidic residues. A coiled-coil region spans residues 315 to 343 (FRELDLARRKREEEEERSRSLSQELVGVD). A phosphoserine mark is found at serine 464, serine 472, serine 501, and serine 527. 2 disordered regions span residues 514–533 (LADS…DIED) and 540–570 (GDEE…ASSL). Residues lysine 547, lysine 553, lysine 566, and lysine 578 each participate in a glycyl lysine isopeptide (Lys-Gly) (interchain with G-Cter in SUMO2) cross-link. The segment covering 664 to 683 (FSADRRSSDPHRLESREAHH) has biased composition (basic and acidic residues). Residues 664–709 (FSADRRSSDPHRLESREAHHSNTHSPEVSHPHPPSPVDPYLLTKNS) form a disordered region. Residue threonine 842 is modified to Phosphothreonine. Residues 876–980 (EKISDEKNRA…SELDKVAQIL (105 aa)) adopt a coiled-coil conformation. Composition is skewed to basic and acidic residues over residues 922-941 (QQGE…KDPL) and 989-1012 (QKSL…KSPE). 2 disordered regions span residues 922-942 (QQGE…DPLL) and 989-1051 (QKSL…TKQL). A Phosphoserine modification is found at serine 1010. Over residues 1013-1023 (KVSSFSNSSSN) the composition is skewed to low complexity. The segment covering 1024-1034 (KESKVNNEKFR) has biased composition (basic and acidic residues). Serine 1037 carries the post-translational modification Phosphoserine. Matrin-type zinc fingers lie at residues 1063-1097 (AGNH…LDPY) and 1136-1166 (FYCQ…KYKK). Basic and acidic residues-rich tracts occupy residues 1195-1235 (RRQS…KLED), 1242-1251 (NSPEKAENKR), 1258-1267 (QLKEEVKKES), 1279-1288 (KKPEKEEEKS), and 1296-1316 (SKEE…EAGK). The disordered stretch occupies residues 1195–1319 (RRQSELKRKL…GKTEAGKAKP (125 aa)). 2 positions are modified to phosphoserine: serine 1243 and serine 1267. Position 1420 is a phosphoserine (serine 1420). Disordered stretches follow at residues 1428–1463 (AEKS…HPAA), 1577–1628 (GKGA…EELH), 1702–1735 (SSFQ…PPQL), and 1753–1775 (ESVN…ESEI). Residues 1440–1462 (ILPPPPPPPPPPPPPPPVIPHPA) show a composition bias toward pro residues. Residues 1602–1623 (SNLSRTKSSDTSSTSPLNSSAS) are compositionally biased toward low complexity. Basic and acidic residues predominate over residues 1708–1719 (TSRDISPEKSEL). Phosphoserine is present on serine 1713. Residues 1724–1734 (PGPPGVEPPPQ) are compositionally biased toward pro residues. Positions 1768-1792 (EDCRESEIETNTELKERVKELSEGI) form a coiled coil. 10 positions are modified to phosphoserine: serine 1856, serine 1896, serine 1971, serine 2030, serine 2035, serine 2091, serine 2101, serine 2189, serine 2192, and serine 2243. Residues 2252-2279 (DNMVPQGMPEQETTVGAIQDHTESSVHN) form a disordered region.

Homodimer. Heterodimer of isoform 1 and isoform 2. Isoform 1 and isoform 2 interact with AR. In terms of tissue distribution, expressed in endocrine tissue.

It localises to the nucleus. Functionally, acts as a transcriptional corepressor for AR-mediated transactivation function. May act as a transcriptional regulator during spermatogenesis and, in particular, during meiotic division. Acts as a transcriptional coactivator for AR-mediated transactivation function. May act as a transcriptional regulator during spermatogenesis and, in particular, during meiotic division. The chain is Zinc finger protein 318 (ZNF318) from Homo sapiens (Human).